We begin with the raw amino-acid sequence, 382 residues long: Galactokinase (382 aa).

Substrate is bound at residue 34–37 (EHTD). Residue 124–130 (GAGLSSS) participates in ATP binding. The Mg(2+) site is built by S130 and E162. The Proton acceptor role is filled by D174. A substrate-binding site is contributed by Y223.

It belongs to the GHMP kinase family. GalK subfamily.

Its subcellular location is the cytoplasm. The catalysed reaction is alpha-D-galactose + ATP = alpha-D-galactose 1-phosphate + ADP + H(+). It functions in the pathway carbohydrate metabolism; galactose metabolism. Catalyzes the transfer of the gamma-phosphate of ATP to D-galactose to form alpha-D-galactose-1-phosphate (Gal-1-P). In Escherichia coli O9:H4 (strain HS), this protein is Galactokinase.